The chain runs to 86 residues: RNA-binding protein Hfq (86 aa).

The Sm domain occupies 12-73; sequence DIFLNQVRKE…ISTISPQKPV (62 aa).

This sequence belongs to the Hfq family. In terms of assembly, homohexamer.

RNA chaperone that binds small regulatory RNA (sRNAs) and mRNAs to facilitate mRNA translational regulation in response to envelope stress, environmental stress and changes in metabolite concentrations. Also binds with high specificity to tRNAs. This chain is RNA-binding protein Hfq, found in Caldanaerobacter subterraneus subsp. tengcongensis (strain DSM 15242 / JCM 11007 / NBRC 100824 / MB4) (Thermoanaerobacter tengcongensis).